A 338-amino-acid chain; its full sequence is Ferredoxin--NADP reductase (338 aa).

Thr14, Asp33, Gln41, Tyr46, Val86, Phe120, Asp284, and Thr325 together coordinate FAD.

Belongs to the ferredoxin--NADP reductase type 2 family. Homodimer. FAD serves as cofactor.

The enzyme catalyses 2 reduced [2Fe-2S]-[ferredoxin] + NADP(+) + H(+) = 2 oxidized [2Fe-2S]-[ferredoxin] + NADPH. This chain is Ferredoxin--NADP reductase, found in Pelagibacter ubique (strain HTCC1062).